Reading from the N-terminus, the 920-residue chain is Androgen receptor (920 aa).

The tract at residues 1-559 is modulating; sequence MEVQLGLGRV…IDYYFPPQKT (559 aa). The interval 1-587 is interaction with ZNF318; sequence MEVQLGLGRV…GSCKVFFKRA (587 aa). 2 disordered regions span residues 36–167 and 195–228; these read NPGP…LSLL and QQQQ…YLGG. A compositionally biased stretch (low complexity) spans 44 to 91; sequence AASAAPPGASLLLLQQQQQQQQQQQQQQQQQQQQQQQETSPRQQQQQQ. Serine 83 bears the Phosphoserine; by CDK9 mark. Serine 96 carries the post-translational modification Phosphoserine. The span at 195 to 217 shows a compositional bias: low complexity; it reads QQQQQEAVSEGSSSGRAREASGA. Residues 218-228 show a composition bias toward polar residues; the sequence is PTSSKDNYLGG. Tyrosine 225 carries the post-translational modification Phosphotyrosine; by CSK. Serine 258 is subject to Phosphoserine. At tyrosine 269 the chain carries Phosphotyrosine; by CSK and TNK2. A phosphotyrosine; by CSK mark is found at tyrosine 309, tyrosine 348, tyrosine 359, and tyrosine 364. Tyrosine 365 carries the phosphotyrosine; by CSK and TNK2 modification. Lysine 388 participates in a covalent cross-link: Glycyl lysine isopeptide (Lys-Gly) (interchain with G-Cter in SUMO). The residue at position 395 (tyrosine 395) is a Phosphotyrosine; by CSK. Residue lysine 521 forms a Glycyl lysine isopeptide (Lys-Gly) (interchain with G-Cter in SUMO) linkage. A phosphotyrosine; by CSK mark is found at tyrosine 535 and tyrosine 552. Residues 552-919 form an interaction with LPXN region; the sequence is YYFPPQKTCL…GKVKPIYFHT (368 aa). 2 NR C4-type zinc fingers span residues 560–580 and 596–620; these read CLIC…CGSC and CASR…LRKC. Residues 560–632 constitute a DNA-binding region (nuclear receptor); that stretch reads CLICGDEASG…AGMTLGARKL (73 aa). Positions 572-662 are interaction with HIPK3; the sequence is YGALTCGSCK…TEETTQKLTV (91 aa). The interaction with CCAR1 stretch occupies residues 592 to 919; sequence QKYLCASRND…GKVKPIYFHT (328 aa). Positions 625–919 are interaction with KAT7; sequence MTLGARKLKK…GKVKPIYFHT (295 aa). A Phosphoserine; by STK4/MST1 modification is found at serine 651. An NR LBD domain is found at 669-900; sequence ECQPIFLNVL…DFPEMMAEII (232 aa). The 17beta-hydroxy-5alpha-androstan-3-one site is built by asparagine 706 and arginine 753. Glycyl lysine isopeptide (Lys-Gly) (interchain with G-Cter in ubiquitin) cross-links involve residues lysine 846 and lysine 848. 17beta-hydroxy-5alpha-androstan-3-one is bound at residue threonine 878. Tyrosine 916 bears the Phosphotyrosine; by CSK mark.

Belongs to the nuclear hormone receptor family. NR3 subfamily. In terms of assembly, binds DNA as a homodimer. Part of a ternary complex containing AR, EFCAB6/DJBP and PARK7. Interacts with HIPK3 and NR0B2 in the presence of androgen. The ligand binding domain interacts with KAT7/HBO1 in the presence of dihydrotestosterone. Interacts with EFCAB6/DJBP, PQBP1, RANBP9, RBAK, SPDEF, SRA1, TGFB1I1 and RREB1. Interacts with ZMIZ1/ZIMP10 and ZMIZ2/ZMIP7 which both enhance its transactivation activity. Interacts with SLC30A9 and RAD54L2/ARIP4. Interacts with MACROD1 (via macro domain). Interacts via the ligand-binding domain with LXXLL and FXXLF motifs from NCOA1, NCOA2, NCOA3 and MAGEA11. Interacts (via nuclear receptor DNA binding domain and nuclear receptor ligand binding domain) with NCOA4. The AR N-terminal poly-Gln region binds Ran resulting in enhancement of AR-mediated transactivation. Ran-binding decreases as the poly-Gln length increases. Interacts with HIP1 (via coiled coil domain). Interacts (via ligand-binding domain) with TRIM68. Interacts with TNK2. Interacts with USP26. Interacts with RNF6. Interacts (regulated by RNF6 probably through polyubiquitination) with RNF14; regulates AR transcriptional activity. Interacts with PRMT2 and TRIM24. Interacts with RACK1. Interacts with RANBP10; this interaction enhances dihydrotestosterone-induced AR transcriptional activity. Interacts with PRPF6 in a hormone-independent way; this interaction enhances dihydrotestosterone-induced AR transcriptional activity. Interacts with STK4/MST1. Interacts with ZIPK/DAPK3. Interacts with LPXN. Interacts with MAK. Part of a complex containing AR, MAK and NCOA3. Interacts with CRY1. Interacts with CCAR1 and GATA2. Interacts with ZNF318. Interacts with BUD31. Interacts with ARID4A. Interacts with ARID4B. Interacts (via NR LBD domain) with ZBTB7A; the interaction is direct and androgen-dependent. Interacts with NCOR1. Interacts with NCOR2. Interacts with CRY2 in a ligand-dependent manner. Sumoylated on Lys-388 (major) and Lys-521. Ubiquitinated. Deubiquitinated by USP26. 'Lys-6' and 'Lys-27'-linked polyubiquitination by RNF6 modulates AR transcriptional activity and specificity. Post-translationally, phosphorylated in prostate cancer cells in response to several growth factors including EGF. Phosphorylation is induced by c-Src kinase (CSK). Tyr-535 is one of the major phosphorylation sites and an increase in phosphorylation and Src kinase activity is associated with prostate cancer progression. Phosphorylation by TNK2 enhances the DNA-binding and transcriptional activity and may be responsible for androgen-independent progression of prostate cancer. Phosphorylation at Ser-83 by CDK9 regulates AR promoter selectivity and cell growth. Phosphorylation by PAK6 leads to AR-mediated transcription inhibition. In terms of processing, palmitoylated by ZDHHC7 and ZDHHC21. Palmitoylation is required for plasma membrane targeting and for rapid intracellular signaling via ERK and AKT kinases and cAMP generation. Mainly expressed in heart and skeletal muscle. In terms of tissue distribution, expressed in basal and stromal cells of the prostate (at protein level).

It is found in the nucleus. Its subcellular location is the cytoplasm. AIM-100 (4-amino-5,6-biaryl-furo[2,3-d]pyrimidine) suppresses TNK2-mediated phosphorylation at Tyr-269. Inhibits the binding of the Tyr-269 phosphorylated form to androgen-responsive enhancers (AREs) and its transcriptional activity. In terms of biological role, steroid hormone receptors are ligand-activated transcription factors that regulate eukaryotic gene expression and affect cellular proliferation and differentiation in target tissues. Transcription factor activity is modulated by bound coactivator and corepressor proteins like ZBTB7A that recruits NCOR1 and NCOR2 to the androgen response elements/ARE on target genes, negatively regulating androgen receptor signaling and androgen-induced cell proliferation. Transcription activation is also down-regulated by NR0B2. Activated, but not phosphorylated, by HIPK3 and ZIPK/DAPK3. Functionally, lacks the C-terminal ligand-binding domain and may therefore constitutively activate the transcription of a specific set of genes independently of steroid hormones. This is Androgen receptor (AR) from Homo sapiens (Human).